Here is a 444-residue protein sequence, read N- to C-terminus: MSEVTKELLELVWGTKSSPGLSDTIFCRWTQGFVFSESEGSALEQFEGGPCAVIAPVQAFLLKKLLFSSEKSSWRDCSEEEQKELLCHTLCDIVESAYDSSGSYCLVSWLRGRTPEEAARISGSPAQSSCQVEHSSALAVEELGFERFHALIQKRSFRTVSELKDAVLDQYSMWGNKFGVLLFLYSVLLTKGIENIKNSIEDANEPLIDPVYGHGSQSLINLLLTGHAVSNVWDGDRECSGMQLLGIHEQAAVGFLTLMEALRYCKVGSYLKSPKFPIWIVGSETHLTVFFAKDMALVAPEAPSEQARRVFQTYDPEDNGFIADSLLEDVMKALDLVSDPEYINLMKNKLDPEGLGIILLGPFLQEFFPDQGSSGPESFTVYHYNGLKQSNYNEKVMYVEGTAVVMGFEDPMLQTDDTPIKRCLQTKWPYIELLWTTDRCPSLN.

The active-site Nucleophile is the Cys-51. Ser-124 is subject to Phosphoserine. His-286 serves as the catalytic Proton acceptor.

It belongs to the MINDY deubiquitinase family. FAM188 subfamily. As to quaternary structure, interacts with COPS5.

It localises to the nucleus. It catalyses the reaction Thiol-dependent hydrolysis of ester, thioester, amide, peptide and isopeptide bonds formed by the C-terminal Gly of ubiquitin (a 76-residue protein attached to proteins as an intracellular targeting signal).. Hydrolase that can remove 'Lys-48'-linked conjugated ubiquitin from proteins. The protein is Ubiquitin carboxyl-terminal hydrolase MINDY-3 of Mus musculus (Mouse).